The chain runs to 482 residues: UDP-N-acetylmuramate--L-alanine ligase (482 aa).

129–135 (GTHGKTT) contacts ATP.

It belongs to the MurCDEF family.

The protein resides in the cytoplasm. The catalysed reaction is UDP-N-acetyl-alpha-D-muramate + L-alanine + ATP = UDP-N-acetyl-alpha-D-muramoyl-L-alanine + ADP + phosphate + H(+). The protein operates within cell wall biogenesis; peptidoglycan biosynthesis. Functionally, cell wall formation. This chain is UDP-N-acetylmuramate--L-alanine ligase, found in Acinetobacter baylyi (strain ATCC 33305 / BD413 / ADP1).